Reading from the N-terminus, the 834-residue chain is Structure-specific endonuclease subunit SLX4 (834 aa).

6 disordered regions span residues 80 to 105, 272 to 307, 332 to 372, 401 to 421, 603 to 649, and 720 to 740; these read RVPR…KTTT, TVPA…QKGK, QNVA…GRPV, GYPE…SNSA, ESKP…AKAL, and ATPN…SIEP. Over residues 279-295 the composition is skewed to polar residues; sequence PTESSTTEDVQGSSSKQ. Positions 296–305 are enriched in basic residues; that stretch reads QRVKAKKPQK. Polar residues-rich tracts occupy residues 345 to 366 and 412 to 421; these read SNRP…TLKN and DTQNSPSNSA. The span at 611–630 shows a compositional bias: basic and acidic residues; it reads DDARKNGFRKENHSDVRVRP. Over residues 729-740 the composition is skewed to low complexity; sequence QGSSSASFSIEP.

It belongs to the SLX4 family. As to quaternary structure, forms a heterodimer with SLX1. In terms of processing, phosphorylated in response to DNA damage.

The protein localises to the nucleus. In terms of biological role, regulatory subunit of the SLX1-SLX4 structure-specific endonuclease that resolves DNA secondary structures generated during DNA repair and recombination. Has endonuclease activity towards branched DNA substrates, introducing single-strand cuts in duplex DNA close to junctions with ss-DNA. The chain is Structure-specific endonuclease subunit SLX4 from Ajellomyces capsulatus (strain NAm1 / WU24) (Darling's disease fungus).